The chain runs to 156 residues: Transcription antitermination protein NusB (156 aa).

It belongs to the NusB family.

Its function is as follows. Involved in transcription antitermination. Required for transcription of ribosomal RNA (rRNA) genes. Binds specifically to the boxA antiterminator sequence of the ribosomal RNA (rrn) operons. The sequence is that of Transcription antitermination protein NusB from Rickettsia massiliae (strain Mtu5).